We begin with the raw amino-acid sequence, 113 residues long: Large ribosomal subunit protein eL31B (113 aa).

The protein belongs to the eukaryotic ribosomal protein eL31 family. Component of the large ribosomal subunit (LSU). Mature yeast ribosomes consist of a small (40S) and a large (60S) subunit. The 40S small subunit contains 1 molecule of ribosomal RNA (18S rRNA) and 33 different proteins (encoded by 57 genes). The large 60S subunit contains 3 rRNA molecules (25S, 5.8S and 5S rRNA) and 46 different proteins (encoded by 81 genes).

The protein resides in the cytoplasm. Component of the ribosome, a large ribonucleoprotein complex responsible for the synthesis of proteins in the cell. The small ribosomal subunit (SSU) binds messenger RNAs (mRNAs) and translates the encoded message by selecting cognate aminoacyl-transfer RNA (tRNA) molecules. The large subunit (LSU) contains the ribosomal catalytic site termed the peptidyl transferase center (PTC), which catalyzes the formation of peptide bonds, thereby polymerizing the amino acids delivered by tRNAs into a polypeptide chain. The nascent polypeptides leave the ribosome through a tunnel in the LSU and interact with protein factors that function in enzymatic processing, targeting, and the membrane insertion of nascent chains at the exit of the ribosomal tunnel. This is Large ribosomal subunit protein eL31B from Saccharomyces cerevisiae (strain ATCC 204508 / S288c) (Baker's yeast).